The following is a 120-amino-acid chain: NAD(P)H-quinone oxidoreductase subunit 3, chloroplastic (120 aa).

The next 3 helical transmembrane spans lie at 10-30, 64-84, and 89-109; these read FWLF…ISKI, MFAL…PWAM, and LGIS…IGLI.

It belongs to the complex I subunit 3 family. In terms of assembly, NDH is composed of at least 16 different subunits, 5 of which are encoded in the nucleus.

The protein localises to the plastid. It localises to the chloroplast thylakoid membrane. The catalysed reaction is a plastoquinone + NADH + (n+1) H(+)(in) = a plastoquinol + NAD(+) + n H(+)(out). It carries out the reaction a plastoquinone + NADPH + (n+1) H(+)(in) = a plastoquinol + NADP(+) + n H(+)(out). NDH shuttles electrons from NAD(P)H:plastoquinone, via FMN and iron-sulfur (Fe-S) centers, to quinones in the photosynthetic chain and possibly in a chloroplast respiratory chain. The immediate electron acceptor for the enzyme in this species is believed to be plastoquinone. Couples the redox reaction to proton translocation, and thus conserves the redox energy in a proton gradient. This Angiopteris evecta (Mule's foot fern) protein is NAD(P)H-quinone oxidoreductase subunit 3, chloroplastic.